Reading from the N-terminus, the 120-residue chain is NADH-quinone oxidoreductase subunit A (120 aa).

A run of 3 helical transmembrane segments spans residues 6-26, 63-83, and 89-109; these read YGII…ALAT, FLYA…YPWA, and LGLF…LGLW.

Belongs to the complex I subunit 3 family. As to quaternary structure, NDH-1 is composed of 14 different subunits. Subunits NuoA, H, J, K, L, M, N constitute the membrane sector of the complex.

Its subcellular location is the cell membrane. The catalysed reaction is a quinone + NADH + 5 H(+)(in) = a quinol + NAD(+) + 4 H(+)(out). In terms of biological role, NDH-1 shuttles electrons from NADH, via FMN and iron-sulfur (Fe-S) centers, to quinones in the respiratory chain. The immediate electron acceptor for the enzyme in this species is believed to be a menaquinone. Couples the redox reaction to proton translocation (for every two electrons transferred, four hydrogen ions are translocated across the cytoplasmic membrane), and thus conserves the redox energy in a proton gradient. In Moorella thermoacetica (strain ATCC 39073 / JCM 9320), this protein is NADH-quinone oxidoreductase subunit A.